A 672-amino-acid chain; its full sequence is tRNA 5-methylaminomethyl-2-thiouridine biosynthesis bifunctional protein MnmC (672 aa).

The tract at residues 1 to 241 (MHKVQFADVH…KRECLQGVKA (241 aa)) is tRNA (mnm(5)s(2)U34)-methyltransferase. Positions 269 to 672 (IGGGIASVFS…LLKGSQVKQG (404 aa)) are FAD-dependent cmnm(5)s(2)U34 oxidoreductase.

It in the N-terminal section; belongs to the methyltransferase superfamily. tRNA (mnm(5)s(2)U34)-methyltransferase family. This sequence in the C-terminal section; belongs to the DAO family. Requires FAD as cofactor.

Its subcellular location is the cytoplasm. The catalysed reaction is 5-aminomethyl-2-thiouridine(34) in tRNA + S-adenosyl-L-methionine = 5-methylaminomethyl-2-thiouridine(34) in tRNA + S-adenosyl-L-homocysteine + H(+). Functionally, catalyzes the last two steps in the biosynthesis of 5-methylaminomethyl-2-thiouridine (mnm(5)s(2)U) at the wobble position (U34) in tRNA. Catalyzes the FAD-dependent demodification of cmnm(5)s(2)U34 to nm(5)s(2)U34, followed by the transfer of a methyl group from S-adenosyl-L-methionine to nm(5)s(2)U34, to form mnm(5)s(2)U34. The chain is tRNA 5-methylaminomethyl-2-thiouridine biosynthesis bifunctional protein MnmC from Pasteurella multocida (strain Pm70).